The chain runs to 317 residues: Tyrosine--tRNA ligase (317 aa).

Tyr-33 provides a ligand contact to L-tyrosine. A 'HIGH' region motif is present at residues 38 to 46 (PSGKIHMGH). L-tyrosine-binding residues include Tyr-155, Gln-159, Asp-162, and Gln-177. The 'KMSKS' region motif lies at 211-215 (KMASS). ATP is bound at residue Ser-214.

This sequence belongs to the class-I aminoacyl-tRNA synthetase family. TyrS type 3 subfamily. In terms of assembly, homodimer.

The protein localises to the cytoplasm. It carries out the reaction tRNA(Tyr) + L-tyrosine + ATP = L-tyrosyl-tRNA(Tyr) + AMP + diphosphate + H(+). Its function is as follows. Catalyzes the attachment of tyrosine to tRNA(Tyr) in a two-step reaction: tyrosine is first activated by ATP to form Tyr-AMP and then transferred to the acceptor end of tRNA(Tyr). This Methanosarcina acetivorans (strain ATCC 35395 / DSM 2834 / JCM 12185 / C2A) protein is Tyrosine--tRNA ligase.